The chain runs to 159 residues: Ribosomal RNA large subunit methyltransferase H (159 aa).

S-adenosyl-L-methionine contacts are provided by residues leucine 76, glycine 108, and 127–132; that span reads FSKMTL.

It belongs to the RNA methyltransferase RlmH family. As to quaternary structure, homodimer.

Its subcellular location is the cytoplasm. The catalysed reaction is pseudouridine(1915) in 23S rRNA + S-adenosyl-L-methionine = N(3)-methylpseudouridine(1915) in 23S rRNA + S-adenosyl-L-homocysteine + H(+). Specifically methylates the pseudouridine at position 1915 (m3Psi1915) in 23S rRNA. This Bacillus cereus (strain ATCC 10987 / NRS 248) protein is Ribosomal RNA large subunit methyltransferase H.